A 57-amino-acid chain; its full sequence is Small ribosomal subunit protein bS21 (57 aa).

Residues 35–57 (RERYEKPSLRRKRKQEAARKRNR) form a disordered region.

The protein belongs to the bacterial ribosomal protein bS21 family.

The polypeptide is Small ribosomal subunit protein bS21 (Thermosynechococcus vestitus (strain NIES-2133 / IAM M-273 / BP-1)).